The primary structure comprises 509 residues: Probable cytochrome P450 519B1 (509 aa).

The helical transmembrane segment at M1–R21 threads the bilayer. C456 is a heme binding site.

It belongs to the cytochrome P450 family. The cofactor is heme.

Its subcellular location is the membrane. In Dictyostelium discoideum (Social amoeba), this protein is Probable cytochrome P450 519B1 (cyp519B1).